The sequence spans 366 residues: Peptide chain release factor 2 (366 aa).

The residue at position 246 (glutamine 246) is an N5-methylglutamine.

Belongs to the prokaryotic/mitochondrial release factor family. In terms of processing, methylated by PrmC. Methylation increases the termination efficiency of RF2.

Its subcellular location is the cytoplasm. In terms of biological role, peptide chain release factor 2 directs the termination of translation in response to the peptide chain termination codons UGA and UAA. This is Peptide chain release factor 2 from Frankia casuarinae (strain DSM 45818 / CECT 9043 / HFP020203 / CcI3).